The chain runs to 916 residues: Translation initiation factor IF-2 (916 aa).

The segment covering 151 to 191 (NLDEQQRLAESDRARDEAIQRKRDEEQAAKDRVEAERKAAE) has biased composition (basic and acidic residues). Disordered stretches follow at residues 151–262 (NLDE…SHVM) and 280–328 (HLSA…ERPT). Low complexity-rich tracts occupy residues 192–243 (EAAA…ATPA) and 293–305 (RGKPTGRPGSSSS). Residues 415–584 (SRPPVVTIMG…SLQAEVLELK (170 aa)) enclose the tr-type G domain. The tract at residues 424 to 431 (GHVDHGKT) is G1. Residue 424 to 431 (GHVDHGKT) participates in GTP binding. Residues 449 to 453 (GITQH) form a G2 region. The segment at 470 to 473 (DTPG) is G3. GTP-binding positions include 470-474 (DTPGH) and 524-527 (NKID). The G4 stretch occupies residues 524–527 (NKID). The segment at 560–562 (SAK) is G5.

Belongs to the TRAFAC class translation factor GTPase superfamily. Classic translation factor GTPase family. IF-2 subfamily.

It is found in the cytoplasm. Functionally, one of the essential components for the initiation of protein synthesis. Protects formylmethionyl-tRNA from spontaneous hydrolysis and promotes its binding to the 30S ribosomal subunits. Also involved in the hydrolysis of GTP during the formation of the 70S ribosomal complex. In Xanthomonas campestris pv. campestris (strain ATCC 33913 / DSM 3586 / NCPPB 528 / LMG 568 / P 25), this protein is Translation initiation factor IF-2.